A 62-amino-acid chain; its full sequence is Protein DsrB (62 aa).

Belongs to the DsrB family.

This Escherichia fergusonii (strain ATCC 35469 / DSM 13698 / CCUG 18766 / IAM 14443 / JCM 21226 / LMG 7866 / NBRC 102419 / NCTC 12128 / CDC 0568-73) protein is Protein DsrB.